We begin with the raw amino-acid sequence, 330 residues long: Taste receptor type 2 member 117 (330 aa).

Residues 1–16 (MKHFWKILSVISQSTL) are Extracellular-facing. Residues 17–37 (SVILIVELVIGIIGNGFMVLV) traverse the membrane as a helical segment. At 38-53 (HCMDWVKKKKMSLVNQ) the chain is on the cytoplasmic side. Residues 54 to 74 (ILTALSISRIFQLCLLFISLV) traverse the membrane as a helical segment. The Extracellular segment spans residues 75 to 95 (INFSYTDLTTSSRMIQVMYNA). N76 carries N-linked (GlcNAc...) asparagine glycosylation. The chain crosses the membrane as a helical span at residues 96 to 116 (WILANHFSIWIATCLTVLYFL). Over 117 to 135 (KIANFSNSFFLYLKWRVEK) the chain is Cytoplasmic. The helical transmembrane segment at 136 to 156 (VVSVTLLVSLLLLILNILLTN) threads the bilayer. The Extracellular segment spans residues 157–190 (LETDMWTNEYQRNISCSFSSHYYAKCHRQVLRLH). Residue N169 is glycosylated (N-linked (GlcNAc...) asparagine). Residues 191 to 211 (IIFLSVPVVLSLSTFLLLIFS) traverse the membrane as a helical segment. The Cytoplasmic portion of the chain corresponds to 212 to 239 (LWTHHKRMQQHVQGGRDARTTAHFKALQ). Residues 240–260 (TVIAFFLLYSIFILSVLIQIW) traverse the membrane as a helical segment. The Extracellular segment spans residues 261–269 (KYELLKKNL). The helical transmembrane segment at 270 to 290 (FVVFCEVVYIAFPTFHSYILI) threads the bilayer. At 291 to 330 (VGDMKLRQACLPLCIIAAEIQTTLCRNFRSLKYFRLCCIF) the chain is on the cytoplasmic side.

The protein belongs to the G-protein coupled receptor T2R family.

Its subcellular location is the membrane. In terms of biological role, putative taste receptor which may play a role in the perception of bitterness. The polypeptide is Taste receptor type 2 member 117 (Mus musculus (Mouse)).